The sequence spans 128 residues: Gastrotropin (128 aa).

A2 carries the post-translational modification N-acetylalanine.

The protein belongs to the calycin superfamily. Fatty-acid binding protein (FABP) family. Found exclusively in the ileum and to a lesser extent in distal jejunum.

Its subcellular location is the cytoplasm. It is found in the membrane. Binds to bile acids and is involved in enterohepatic bile acid metabolism. Required for efficient apical to basolateral transport of conjugated bile acids in ileal enterocytes. Stimulates gastric acid and pepsinogen secretion. The sequence is that of Gastrotropin (FABP6) from Sus scrofa (Pig).